The primary structure comprises 433 residues: Histidine--tRNA ligase (433 aa).

This sequence belongs to the class-II aminoacyl-tRNA synthetase family. Homodimer.

The protein localises to the cytoplasm. The enzyme catalyses tRNA(His) + L-histidine + ATP = L-histidyl-tRNA(His) + AMP + diphosphate + H(+). This is Histidine--tRNA ligase from Azoarcus sp. (strain BH72).